The sequence spans 160 residues: 6,7-dimethyl-8-ribityllumazine synthase (160 aa).

5-amino-6-(D-ribitylamino)uracil is bound by residues phenylalanine 23, 61–63 (SFE), and 85–87 (AVI). 90 to 91 (DT) provides a ligand contact to (2S)-2-hydroxy-3-oxobutyl phosphate. Residue histidine 93 is the Proton donor of the active site. Phenylalanine 118 is a 5-amino-6-(D-ribitylamino)uracil binding site. Arginine 132 is a (2S)-2-hydroxy-3-oxobutyl phosphate binding site.

This sequence belongs to the DMRL synthase family.

The enzyme catalyses (2S)-2-hydroxy-3-oxobutyl phosphate + 5-amino-6-(D-ribitylamino)uracil = 6,7-dimethyl-8-(1-D-ribityl)lumazine + phosphate + 2 H2O + H(+). It functions in the pathway cofactor biosynthesis; riboflavin biosynthesis; riboflavin from 2-hydroxy-3-oxobutyl phosphate and 5-amino-6-(D-ribitylamino)uracil: step 1/2. In terms of biological role, catalyzes the formation of 6,7-dimethyl-8-ribityllumazine by condensation of 5-amino-6-(D-ribitylamino)uracil with 3,4-dihydroxy-2-butanone 4-phosphate. This is the penultimate step in the biosynthesis of riboflavin. In Synechococcus sp. (strain CC9605), this protein is 6,7-dimethyl-8-ribityllumazine synthase.